The primary structure comprises 349 residues: Holliday junction branch migration complex subunit RuvB (349 aa).

A large ATPase domain (RuvB-L) region spans residues 1–185 (MSQEKERLIS…FGSIFRLDFY (185 aa)). Residues L24, R25, G66, K69, T70, T71, 132–134 (EDY), R175, Y185, and R222 each bind ATP. Residue T70 participates in Mg(2+) binding. Residues 186-256 (DEEAIHDIVR…IAAESLACLE (71 aa)) are small ATPAse domain (RuvB-S). Positions 259–349 (KLGLDEIDHK…QQGLWTENGS (91 aa)) are head domain (RuvB-H). Residues R314 and R319 each coordinate DNA.

This sequence belongs to the RuvB family. Homohexamer. Forms an RuvA(8)-RuvB(12)-Holliday junction (HJ) complex. HJ DNA is sandwiched between 2 RuvA tetramers; dsDNA enters through RuvA and exits via RuvB. An RuvB hexamer assembles on each DNA strand where it exits the tetramer. Each RuvB hexamer is contacted by two RuvA subunits (via domain III) on 2 adjacent RuvB subunits; this complex drives branch migration. In the full resolvosome a probable DNA-RuvA(4)-RuvB(12)-RuvC(2) complex forms which resolves the HJ.

It is found in the cytoplasm. It carries out the reaction ATP + H2O = ADP + phosphate + H(+). Its function is as follows. The RuvA-RuvB-RuvC complex processes Holliday junction (HJ) DNA during genetic recombination and DNA repair, while the RuvA-RuvB complex plays an important role in the rescue of blocked DNA replication forks via replication fork reversal (RFR). RuvA specifically binds to HJ cruciform DNA, conferring on it an open structure. The RuvB hexamer acts as an ATP-dependent pump, pulling dsDNA into and through the RuvAB complex. RuvB forms 2 homohexamers on either side of HJ DNA bound by 1 or 2 RuvA tetramers; 4 subunits per hexamer contact DNA at a time. Coordinated motions by a converter formed by DNA-disengaged RuvB subunits stimulates ATP hydrolysis and nucleotide exchange. Immobilization of the converter enables RuvB to convert the ATP-contained energy into a lever motion, pulling 2 nucleotides of DNA out of the RuvA tetramer per ATP hydrolyzed, thus driving DNA branch migration. The RuvB motors rotate together with the DNA substrate, which together with the progressing nucleotide cycle form the mechanistic basis for DNA recombination by continuous HJ branch migration. Branch migration allows RuvC to scan DNA until it finds its consensus sequence, where it cleaves and resolves cruciform DNA. The sequence is that of Holliday junction branch migration complex subunit RuvB from Dehalococcoides mccartyi (strain CBDB1).